A 238-amino-acid chain; its full sequence is Urease subunit alpha (238 aa).

Residues 1–102 (MKLTPKELDK…LVTVHTPIEA (102 aa)) are urease gamma. The tract at residues 103-238 (NGKLVPGELF…DDNYVKTIKE (136 aa)) is urease beta.

It in the N-terminal section; belongs to the urease gamma subunit family. This sequence in the C-terminal section; belongs to the urease beta subunit family. In terms of assembly, heterohexamer of 3 UreA (alpha) and 3 UreB (beta) subunits.

It localises to the cytoplasm. It carries out the reaction urea + 2 H2O + H(+) = hydrogencarbonate + 2 NH4(+). The protein operates within nitrogen metabolism; urea degradation; CO(2) and NH(3) from urea (urease route): step 1/1. This Helicobacter pylori (strain P12) protein is Urease subunit alpha.